The following is a 337-amino-acid chain: tRNA(Ile)-lysidine synthase (337 aa).

40-45 (SGGQDS) contributes to the ATP binding site.

This sequence belongs to the tRNA(Ile)-lysidine synthase family.

Its subcellular location is the cytoplasm. It carries out the reaction cytidine(34) in tRNA(Ile2) + L-lysine + ATP = lysidine(34) in tRNA(Ile2) + AMP + diphosphate + H(+). In terms of biological role, ligates lysine onto the cytidine present at position 34 of the AUA codon-specific tRNA(Ile) that contains the anticodon CAU, in an ATP-dependent manner. Cytidine is converted to lysidine, thus changing the amino acid specificity of the tRNA from methionine to isoleucine. The sequence is that of tRNA(Ile)-lysidine synthase from Parasynechococcus marenigrum (strain WH8102).